The chain runs to 207 residues: Thiamine-phosphate synthase (207 aa).

4-amino-2-methyl-5-(diphosphooxymethyl)pyrimidine contacts are provided by residues 38 to 42 and N70; that span reads QYRAK. Mg(2+) contacts are provided by D71 and D90. 4-amino-2-methyl-5-(diphosphooxymethyl)pyrimidine is bound at residue T109. 135–137 is a binding site for 2-[(2R,5Z)-2-carboxy-4-methylthiazol-5(2H)-ylidene]ethyl phosphate; sequence TNS. Position 138 (K138) interacts with 4-amino-2-methyl-5-(diphosphooxymethyl)pyrimidine. Residues G165 and 185–186 contribute to the 2-[(2R,5Z)-2-carboxy-4-methylthiazol-5(2H)-ylidene]ethyl phosphate site; that span reads IS.

The protein belongs to the thiamine-phosphate synthase family. The cofactor is Mg(2+).

It catalyses the reaction 2-[(2R,5Z)-2-carboxy-4-methylthiazol-5(2H)-ylidene]ethyl phosphate + 4-amino-2-methyl-5-(diphosphooxymethyl)pyrimidine + 2 H(+) = thiamine phosphate + CO2 + diphosphate. The enzyme catalyses 2-(2-carboxy-4-methylthiazol-5-yl)ethyl phosphate + 4-amino-2-methyl-5-(diphosphooxymethyl)pyrimidine + 2 H(+) = thiamine phosphate + CO2 + diphosphate. It carries out the reaction 4-methyl-5-(2-phosphooxyethyl)-thiazole + 4-amino-2-methyl-5-(diphosphooxymethyl)pyrimidine + H(+) = thiamine phosphate + diphosphate. The protein operates within cofactor biosynthesis; thiamine diphosphate biosynthesis; thiamine phosphate from 4-amino-2-methyl-5-diphosphomethylpyrimidine and 4-methyl-5-(2-phosphoethyl)-thiazole: step 1/1. Functionally, condenses 4-methyl-5-(beta-hydroxyethyl)thiazole monophosphate (THZ-P) and 2-methyl-4-amino-5-hydroxymethyl pyrimidine pyrophosphate (HMP-PP) to form thiamine monophosphate (TMP). In Clostridium perfringens (strain SM101 / Type A), this protein is Thiamine-phosphate synthase.